Reading from the N-terminus, the 330-residue chain is Replication factor C small subunit (330 aa).

48–55 contributes to the ATP binding site; the sequence is GPPGTGKT.

The protein belongs to the activator 1 small subunits family. RfcS subfamily. Heteropentamer composed of four small subunits (RfcS) and one large subunit (RfcL). A homotetramer of this subunit interacts with PCNA heterodimer PCNA1-PCNA2.

Part of the RFC clamp loader complex which loads the PCNA sliding clamp onto DNA. The complex possesses DNA-dependent ATPase activity. The chain is Replication factor C small subunit (rfcS) from Saccharolobus solfataricus (strain ATCC 35092 / DSM 1617 / JCM 11322 / P2) (Sulfolobus solfataricus).